The primary structure comprises 270 residues: Thymidylate synthase (270 aa).

Residues Arg-28 and 133–134 (RR) contribute to the dUMP site. The Nucleophile role is filled by Cys-153. DUMP contacts are provided by residues 173-176 (RSAD), Asn-184, and 214-216 (HIY). Asp-176 lines the (6R)-5,10-methylene-5,6,7,8-tetrahydrofolate pocket. A (6R)-5,10-methylene-5,6,7,8-tetrahydrofolate-binding site is contributed by Ala-269.

This sequence belongs to the thymidylate synthase family. Bacterial-type ThyA subfamily. Homodimer.

The protein resides in the cytoplasm. It catalyses the reaction dUMP + (6R)-5,10-methylene-5,6,7,8-tetrahydrofolate = 7,8-dihydrofolate + dTMP. It functions in the pathway pyrimidine metabolism; dTTP biosynthesis. Catalyzes the reductive methylation of 2'-deoxyuridine-5'-monophosphate (dUMP) to 2'-deoxythymidine-5'-monophosphate (dTMP) while utilizing 5,10-methylenetetrahydrofolate (mTHF) as the methyl donor and reductant in the reaction, yielding dihydrofolate (DHF) as a by-product. This enzymatic reaction provides an intracellular de novo source of dTMP, an essential precursor for DNA biosynthesis. The polypeptide is Thymidylate synthase (Corynebacterium diphtheriae (strain ATCC 700971 / NCTC 13129 / Biotype gravis)).